Consider the following 560-residue polypeptide: Arginine--tRNA ligase (560 aa).

A 'HIGH' region motif is present at residues 122 to 132; that stretch reads ANPNGPLHIGH.

This sequence belongs to the class-I aminoacyl-tRNA synthetase family.

It is found in the cytoplasm. The enzyme catalyses tRNA(Arg) + L-arginine + ATP = L-arginyl-tRNA(Arg) + AMP + diphosphate. The protein is Arginine--tRNA ligase (argS) of Methanothermobacter thermautotrophicus (strain ATCC 29096 / DSM 1053 / JCM 10044 / NBRC 100330 / Delta H) (Methanobacterium thermoautotrophicum).